Here is a 345-residue protein sequence, read N- to C-terminus: MAETDSFLHLARPLGPVAVGSAPTTAPLNVVIQPQAIFSILDHSLRRNADQERVIGTLLGTRSEDGTEVEIRSTFAVGHTETTDQVEVDMEYQKQMLALHLKANPKEVLVGWYATSSELNTFSALIQNFYSGQGDGTWPHPAVHLTVSTEPGKDIETRAYISAPVGVTAERAADSAAFIPVPYEIRYGEAEKSGLETIASAKDAESRATNIFTDIEALERAIEEVLGMIDRVSRYVESVIDEEAPASTALGQFLLNALALAPKVEPADIERDFNNHIQDVLVVSYLANTIRTQMELSNRLATAQLTLGGEGASAEAGAQRGQRGGRGGRGGQQRTQERASEEVRA.

Residues 30 to 166 (VVIQPQAIFS…TRAYISAPVG (137 aa)) form the MPN domain. A disordered region spans residues 310–345 (EGASAEAGAQRGQRGGRGGRGGQQRTQERASEEVRA). Residues 312 to 321 (ASAEAGAQRG) show a composition bias toward low complexity. Positions 322–331 (QRGGRGGRGG) are enriched in gly residues. Positions 335-345 (TQERASEEVRA) are enriched in basic and acidic residues.

This sequence belongs to the eIF-3 subunit F family. In terms of assembly, component of the eukaryotic translation initiation factor 3 (eIF-3) complex.

Its subcellular location is the cytoplasm. Functionally, component of the eukaryotic translation initiation factor 3 (eIF-3) complex, which is involved in protein synthesis of a specialized repertoire of mRNAs and, together with other initiation factors, stimulates binding of mRNA and methionyl-tRNAi to the 40S ribosome. The eIF-3 complex specifically targets and initiates translation of a subset of mRNAs involved in cell proliferation. The chain is Eukaryotic translation initiation factor 3 subunit F from Neosartorya fischeri (strain ATCC 1020 / DSM 3700 / CBS 544.65 / FGSC A1164 / JCM 1740 / NRRL 181 / WB 181) (Aspergillus fischerianus).